The sequence spans 381 residues: Probable envelope ADP,ATP carrier protein, chloroplastic (381 aa).

Residues 1–26 constitute a chloroplast transit peptide; it reads MEEDRAILTFHRIPSLNSSLITTSSP. Helical transmembrane passes span 78–98, 154–179, 191–211, 237–257, and 281–301; these read LAIL…ALAG, LPQV…NLFK, LAAG…LDVL, IASF…YIAV, and LLTA…LDTV. 3 Solcar repeats span residues 85–177, 185–268, and 279–359; these read PKDA…YKNL, LSVI…VKKS, and SSLL…VKRL. Arg159 serves as a coordination point for ADP. Arg302 contacts ADP. A helical membrane pass occupies residues 334-360; it reads GFLPNALKTLPNSSIRLTTFDMVKRLI.

Belongs to the mitochondrial carrier (TC 2.A.29) family.

Its subcellular location is the plastid. The protein localises to the chloroplast membrane. In terms of biological role, transports adenine nucleotides. This Arabidopsis thaliana (Mouse-ear cress) protein is Probable envelope ADP,ATP carrier protein, chloroplastic (EAAC).